A 236-amino-acid chain; its full sequence is Ribose-5-phosphate isomerase A (236 aa).

Substrate-binding positions include 29-32 (SGST), 86-89 (DGAD), and 99-102 (KGGG). The active-site Proton acceptor is Glu108. Position 126 (Lys126) interacts with substrate.

The protein belongs to the ribose 5-phosphate isomerase family. Homodimer.

It catalyses the reaction aldehydo-D-ribose 5-phosphate = D-ribulose 5-phosphate. The protein operates within carbohydrate degradation; pentose phosphate pathway; D-ribose 5-phosphate from D-ribulose 5-phosphate (non-oxidative stage): step 1/1. Functionally, catalyzes the reversible conversion of ribose-5-phosphate to ribulose 5-phosphate. In Prochlorococcus marinus (strain NATL2A), this protein is Ribose-5-phosphate isomerase A.